Consider the following 324-residue polypeptide: Putative ribose-phosphate pyrophosphokinase 2 (324 aa).

ATP contacts are provided by residues 43 to 45 (DGE) and 102 to 103 (RQ). Mg(2+) is bound at residue His-136. Residues Asp-225 and 229-233 (NTGKT) each bind D-ribose 5-phosphate.

The protein belongs to the ribose-phosphate pyrophosphokinase family. Class I subfamily. In terms of assembly, homohexamer. Mg(2+) serves as cofactor.

Its subcellular location is the cytoplasm. The enzyme catalyses D-ribose 5-phosphate + ATP = 5-phospho-alpha-D-ribose 1-diphosphate + AMP + H(+). Its pathway is metabolic intermediate biosynthesis; 5-phospho-alpha-D-ribose 1-diphosphate biosynthesis; 5-phospho-alpha-D-ribose 1-diphosphate from D-ribose 5-phosphate (route I): step 1/1. Functionally, involved in the biosynthesis of the central metabolite phospho-alpha-D-ribosyl-1-pyrophosphate (PRPP) via the transfer of pyrophosphoryl group from ATP to 1-hydroxyl of ribose-5-phosphate (Rib-5-P). This Streptococcus agalactiae serotype III (strain NEM316) protein is Putative ribose-phosphate pyrophosphokinase 2.